The following is a 97-amino-acid chain: Small ribosomal subunit protein bS6 (97 aa).

It belongs to the bacterial ribosomal protein bS6 family.

Binds together with bS18 to 16S ribosomal RNA. The sequence is that of Small ribosomal subunit protein bS6 from Listeria monocytogenes serotype 4b (strain CLIP80459).